The chain runs to 216 residues: Probable GTP-binding protein EngB (216 aa).

An EngB-type G domain is found at 27-201 (GGVEIAFAGR…AQTLTGWYLA (175 aa)). GTP-binding positions include 35–42 (GRSNAGKS), 62–66 (GRTQL), 80–83 (DLPG), 147–150 (TKAD), and 180–182 (FSS). Residues S42 and T64 each contribute to the Mg(2+) site.

This sequence belongs to the TRAFAC class TrmE-Era-EngA-EngB-Septin-like GTPase superfamily. EngB GTPase family. Requires Mg(2+) as cofactor.

In terms of biological role, necessary for normal cell division and for the maintenance of normal septation. The sequence is that of Probable GTP-binding protein EngB from Aeromonas hydrophila subsp. hydrophila (strain ATCC 7966 / DSM 30187 / BCRC 13018 / CCUG 14551 / JCM 1027 / KCTC 2358 / NCIMB 9240 / NCTC 8049).